The chain runs to 219 residues: PKHD-type hydroxylase Mmar10_1675 (219 aa).

Positions 77–171 (TLSRILVSRY…RVAVVGWVRS (95 aa)) constitute a Fe2OG dioxygenase domain. Positions 95, 97, and 152 each coordinate Fe cation. Residue arginine 162 coordinates 2-oxoglutarate.

It depends on Fe(2+) as a cofactor. The cofactor is L-ascorbate.

The sequence is that of PKHD-type hydroxylase Mmar10_1675 from Maricaulis maris (strain MCS10) (Caulobacter maris).